We begin with the raw amino-acid sequence, 425 residues long: Serine hydroxymethyltransferase (425 aa).

(6S)-5,6,7,8-tetrahydrofolate-binding positions include Leu128 and 132-134 (GHL). Residue Lys237 is modified to N6-(pyridoxal phosphate)lysine.

This sequence belongs to the SHMT family. In terms of assembly, homodimer. Requires pyridoxal 5'-phosphate as cofactor.

It is found in the cytoplasm. The enzyme catalyses (6R)-5,10-methylene-5,6,7,8-tetrahydrofolate + glycine + H2O = (6S)-5,6,7,8-tetrahydrofolate + L-serine. It functions in the pathway one-carbon metabolism; tetrahydrofolate interconversion. It participates in amino-acid biosynthesis; glycine biosynthesis; glycine from L-serine: step 1/1. Catalyzes the reversible interconversion of serine and glycine with tetrahydrofolate (THF) serving as the one-carbon carrier. This reaction serves as the major source of one-carbon groups required for the biosynthesis of purines, thymidylate, methionine, and other important biomolecules. Also exhibits THF-independent aldolase activity toward beta-hydroxyamino acids, producing glycine and aldehydes, via a retro-aldol mechanism. The sequence is that of Serine hydroxymethyltransferase from Wolbachia sp. subsp. Drosophila simulans (strain wRi).